The primary structure comprises 365 residues: Zinc finger protein lsy-2 (365 aa).

Residues methionine 1–tyrosine 36 are disordered. A compositionally biased stretch (polar residues) spans lysine 8–tyrosine 36. C2H2-type zinc fingers lie at residues histidine 78–histidine 100, phenylalanine 106–histidine 128, histidine 134–histidine 156, histidine 264–histidine 287, and phenylalanine 296–histidine 318.

Its subcellular location is the nucleus speckle. In terms of biological role, involved in transcriptional regulation. Required to specify left-right asymmetry of the ASE gustatory neurons, probably acting upstream of microRNA lsy-6. Involved in maintaining the distinction between somatic and germ cells, perhaps acting by repressing germ cell-specific genes in somatic cells. The chain is Zinc finger protein lsy-2 from Caenorhabditis elegans.